The primary structure comprises 61 residues: Small ribosomal subunit protein uS14 (61 aa).

Positions 24, 27, 40, and 43 each coordinate Zn(2+).

The protein belongs to the universal ribosomal protein uS14 family. Zinc-binding uS14 subfamily. Part of the 30S ribosomal subunit. Contacts proteins S3 and S10. It depends on Zn(2+) as a cofactor.

Functionally, binds 16S rRNA, required for the assembly of 30S particles and may also be responsible for determining the conformation of the 16S rRNA at the A site. In Rhodopirellula baltica (strain DSM 10527 / NCIMB 13988 / SH1), this protein is Small ribosomal subunit protein uS14.